The following is a 183-amino-acid chain: uncharacterized protein (183 aa).

This is an uncharacterized protein from Treponema pallidum (strain Nichols).